The sequence spans 28 residues: Potassium channel toxin alpha-KTx 9.5 (28 aa).

3 disulfides stabilise this stretch: Cys3/Cys19, Cys6/Cys24, and Cys10/Cys26. Val28 is subject to Valine amide.

Expressed by the venom gland.

It is found in the secreted. Its function is as follows. Blocks voltage-gated potassium channels Kv1.1/KCNA1 (IC(50)=145 nM), Kv1.2/KCNA2 (IC(50)=2.5 nM), and Kv1.3/KCNA3 (IC(50)=15). Also inhibits calcium-activated potassium channels (KCa/KCNN). This Buthus occitanus tunetanus (Common European scorpion) protein is Potassium channel toxin alpha-KTx 9.5.